Consider the following 370-residue polypeptide: Glutamate 5-kinase (370 aa).

Lys-13 provides a ligand contact to ATP. Ser-54, Asp-140, and Asn-152 together coordinate substrate. ATP-binding positions include 172 to 173 (SD) and 214 to 220 (SGGMVTK). In terms of domain architecture, PUA spans 278–355 (TGTLVLDAGA…GEIEAILGFR (78 aa)).

Belongs to the glutamate 5-kinase family.

The protein localises to the cytoplasm. The catalysed reaction is L-glutamate + ATP = L-glutamyl 5-phosphate + ADP. The protein operates within amino-acid biosynthesis; L-proline biosynthesis; L-glutamate 5-semialdehyde from L-glutamate: step 1/2. In terms of biological role, catalyzes the transfer of a phosphate group to glutamate to form L-glutamate 5-phosphate. The chain is Glutamate 5-kinase from Paramagnetospirillum magneticum (strain ATCC 700264 / AMB-1) (Magnetospirillum magneticum).